The sequence spans 572 residues: Dihydroxy-acid dehydratase (572 aa).

Residue aspartate 78 participates in Mg(2+) binding. Cysteine 119 is a binding site for [2Fe-2S] cluster. Positions 120 and 121 each coordinate Mg(2+). Lysine 121 is modified (N6-carboxylysine). Cysteine 192 lines the [2Fe-2S] cluster pocket. Mg(2+) is bound at residue glutamate 459. The active-site Proton acceptor is the serine 485.

It belongs to the IlvD/Edd family. Homodimer. [2Fe-2S] cluster is required as a cofactor. It depends on Mg(2+) as a cofactor.

The catalysed reaction is (2R)-2,3-dihydroxy-3-methylbutanoate = 3-methyl-2-oxobutanoate + H2O. It catalyses the reaction (2R,3R)-2,3-dihydroxy-3-methylpentanoate = (S)-3-methyl-2-oxopentanoate + H2O. It participates in amino-acid biosynthesis; L-isoleucine biosynthesis; L-isoleucine from 2-oxobutanoate: step 3/4. Its pathway is amino-acid biosynthesis; L-valine biosynthesis; L-valine from pyruvate: step 3/4. Functionally, functions in the biosynthesis of branched-chain amino acids. Catalyzes the dehydration of (2R,3R)-2,3-dihydroxy-3-methylpentanoate (2,3-dihydroxy-3-methylvalerate) into 2-oxo-3-methylpentanoate (2-oxo-3-methylvalerate) and of (2R)-2,3-dihydroxy-3-methylbutanoate (2,3-dihydroxyisovalerate) into 2-oxo-3-methylbutanoate (2-oxoisovalerate), the penultimate precursor to L-isoleucine and L-valine, respectively. The sequence is that of Dihydroxy-acid dehydratase from Helicobacter hepaticus (strain ATCC 51449 / 3B1).